The following is a 395-amino-acid chain: MATAQLQRTSMSALVFPNKISTEQQSLVLVKRLLAVSVSCITYLRGIFPECAYGTRYLDDLCVKILREDKNCPGSTQLVKWMLGCYDALQKKYLRMVVLAVYTNPEDPQTISECYQFKFKYASNGPVMDFISKNQSSESSMSSADTKKASILLIRKIYILMQNLGPLPNDVCLTMKLFYYDEVTPPDYQPPGFKDGDCEGVIFEGEPMYLNVGEVPTPFHTFKVKVTTEKERMENIDSAILSPKQLKTPLQKILMDKDDVADEQEHYISDDFDVETKMEEQKRNLGSSELGEPSLVCEEDEIMRSKESLDLSISHSQVEQLVSKTSELDVSESKTRSGKIFQNKMANGNQPVKSSKENRKRNQLESGKTVLYHFDSSSQESVPKRRKFSEPKEYV.

Positions 24–226 (QQSLVLVKRL…TPFHTFKVKV (203 aa)) constitute an HORMA domain. Residues 329–395 (DVSESKTRSG…RKFSEPKEYV (67 aa)) form a disordered region. Positions 344–353 (KMANGNQPVK) are enriched in polar residues. The span at 354-363 (SSKENRKRNQ) shows a compositional bias: basic and acidic residues. Phosphoserine is present on Ser-377. Residues 384-387 (KRRK) carry the Nuclear localization signal motif.

As to quaternary structure, interacts with HORMAD2. Interacts with IHO1. Post-translationally, phosphorylated at Ser-378 in a SPO11-dependent manner.

It is found in the nucleus. It localises to the chromosome. In terms of biological role, plays a key role in meiotic progression. Regulates 3 different functions during meiosis: ensures that sufficient numbers of processed DNA double-strand breaks (DSBs) are available for successful homology search by increasing the steady-state numbers of single-stranded DSB ends. Promotes synaptonemal-complex formation independently of its role in homology search. Plays a key role in the male mid-pachytene checkpoint and the female meiotic prophase checkpoint: required for efficient build-up of ATR activity on unsynapsed chromosome regions, a process believed to form the basis of meiotic silencing of unsynapsed chromatin (MSUC) and meiotic prophase quality control in both sexes. The sequence is that of HORMA domain-containing protein 1 (HORMAD1) from Canis lupus familiaris (Dog).